Reading from the N-terminus, the 337-residue chain is RNA 3'-terminal phosphate cyclase (337 aa).

Residues glutamine 101 and 282–285 each bind ATP; that span reads HMSD. The active-site Tele-AMP-histidine intermediate is the histidine 306.

Belongs to the RNA 3'-terminal cyclase family. Type 1 subfamily.

It is found in the cytoplasm. The enzyme catalyses a 3'-end 3'-phospho-ribonucleotide-RNA + ATP = a 3'-end 2',3'-cyclophospho-ribonucleotide-RNA + AMP + diphosphate. In terms of biological role, catalyzes the conversion of 3'-phosphate to a 2',3'-cyclic phosphodiester at the end of RNA. The mechanism of action of the enzyme occurs in 3 steps: (A) adenylation of the enzyme by ATP; (B) transfer of adenylate to an RNA-N3'P to produce RNA-N3'PP5'A; (C) and attack of the adjacent 2'-hydroxyl on the 3'-phosphorus in the diester linkage to produce the cyclic end product. The biological role of this enzyme is unknown but it is likely to function in some aspects of cellular RNA processing. This is RNA 3'-terminal phosphate cyclase from Saccharolobus islandicus (strain M.16.4 / Kamchatka #3) (Sulfolobus islandicus).